The sequence spans 253 residues: MYLFIYIFFFFFFFFFFVIVQKDIEQLDIKCAHEQMNIQKQYDEKKKPLFEKRDEIIQKIPGFWANTLRKHPALSDIVPEDIDILNHLVKLDLKDNMDNNGSYKITFIFGEKAKEFMEPLTLVKHVTFDNNQEKVVECTRIKWKEGKNPIAAVTHNRSDLDNEIPKWSIFEWFTTDELQDKPDVGELIRREIWHNPLSYYLGLEEFDEFDDDFDEEFDDDDDDDDDDDDDDDDDDKDDDLDGDDDGNNDDNDD.

The signal sequence occupies residues 1–22; it reads MYLFIYIFFFFFFFFFFVIVQK. A disordered region spans residues 211 to 253; that stretch reads DDFDEEFDDDDDDDDDDDDDDDDDDKDDDLDGDDDGNNDDNDD.

The protein belongs to the nucleosome assembly protein (NAP) family.

The chain is Aspartic acid-rich protein from Plasmodium falciparum (isolate fcm17 / Senegal).